Reading from the N-terminus, the 534-residue chain is Pentatricopeptide repeat-containing protein At5g59600 (534 aa).

12 PPR repeats span residues 50 to 80 (LTRI…MPKR), 81 to 115 (DISG…GLKL), 116 to 150 (DAFI…SYES), 151 to 181 (DAFI…LGEQ), 182 to 216 (DLVV…GIKP), 217 to 251 (DVIT…GYKP), 252 to 286 (DVVS…GLYP), 287 to 321 (NSAT…GLED), 322 to 352 (HGFV…TPKK), 353 to 387 (TTVT…GEKL), 388 to 418 (DHLT…MQNK), and 424 to 454 (RLEH…MRME). Residues 459–534 (VWGALLAACR…FLGSSWVETV (76 aa)) are type E motif.

Belongs to the PPR family. PCMP-E subfamily.

The protein is Pentatricopeptide repeat-containing protein At5g59600 (PCMP-E1) of Arabidopsis thaliana (Mouse-ear cress).